We begin with the raw amino-acid sequence, 392 residues long: General receptor for phosphoinositides 1-associated scaffold protein (392 aa).

Positions 1 to 50 (MTLRRLRKLQQKEEATAAPDPAGRAPDSEAARAAPLPSGPPAAAAPPGAP) are disordered. Over residues 37-49 (PSGPPAAAAPPGA) the composition is skewed to pro residues. Phosphothreonine is present on Thr-76. The residue at position 93 (Ser-93) is a Phosphoserine. The PDZ domain maps to 100–189 (VLTLEKGDNQ…VLRLETLYGT (90 aa)). Residues 180–257 (VLRLETLYGT…GAGLLPGSLP (78 aa)) form an interaction with PSCD3 region. Tyr-236 carries the post-translational modification Phosphotyrosine. Omega-N-methylarginine is present on Arg-269. Residues 294–315 (PQALPPPPPPARALGPSSAETP) form a disordered region. Ser-384 is subject to Phosphoserine.

As to quaternary structure, heteromer. Composed of TAMALIN, CYTH2 and at least one GRM1. Also interacts with GRM2, GRM3 and GRM5. Interacts with CYTH3. Highly expressed in brain, heart and lung, and to a lower extent in embryo, kidney and ovary.

It localises to the cytoplasm. The protein resides in the perinuclear region. The protein localises to the cell membrane. Its subcellular location is the postsynaptic cell membrane. In terms of biological role, plays a role in intracellular trafficking and contributes to the macromolecular organization of group 1 metabotropic glutamate receptors (mGluRs) at synapses. The polypeptide is General receptor for phosphoinositides 1-associated scaffold protein (Mus musculus (Mouse)).